A 422-amino-acid polypeptide reads, in one-letter code: Zinc finger protein zfp-2 (422 aa).

The disordered stretch occupies residues 95–119 (AIPCTSSSMQPSTSSNPSSGEHQPV). Positions 99–113 (TSSSMQPSTSSNPSS) are enriched in low complexity. 7 consecutive C2H2-type zinc fingers follow at residues 171–194 (YRCT…QEVH), 200–222 (FRCF…LKDH), 229–251 (FSCD…HKMH), 255–278 (STCQ…STAH), 300–322 (YSCS…ERIH), 328–350 (YSCG…IRTH), and 356–379 (YGCG…LAAH).

Expressed in vulval cells and all somatic gonad structures such as spermatheca, sheath cells, uterine cells and distal tip cells.

It localises to the nucleus. Probable zinc finger transcription factor that acts as a transcriptional repressor. Acts redundantly with the transcriptional repressor lin-35 to control the development of somatic gonad lineages. May, in addition, suppress sensitivity to RNAi. This is Zinc finger protein zfp-2 from Caenorhabditis elegans.